Here is a 569-residue protein sequence, read N- to C-terminus: Sulfite reductase [NADPH] hemoprotein beta-component (569 aa).

4 residues coordinate [4Fe-4S] cluster: cysteine 433, cysteine 439, cysteine 478, and cysteine 482. Cysteine 482 lines the siroheme pocket.

The protein belongs to the nitrite and sulfite reductase 4Fe-4S domain family. Alpha(8)-beta(8). The alpha component is a flavoprotein, the beta component is a hemoprotein. Requires siroheme as cofactor. It depends on [4Fe-4S] cluster as a cofactor.

The enzyme catalyses hydrogen sulfide + 3 NADP(+) + 3 H2O = sulfite + 3 NADPH + 4 H(+). Its pathway is sulfur metabolism; hydrogen sulfide biosynthesis; hydrogen sulfide from sulfite (NADPH route): step 1/1. Component of the sulfite reductase complex that catalyzes the 6-electron reduction of sulfite to sulfide. This is one of several activities required for the biosynthesis of L-cysteine from sulfate. The polypeptide is Sulfite reductase [NADPH] hemoprotein beta-component (Blochmanniella floridana).